Here is a 614-residue protein sequence, read N- to C-terminus: MNLCSSAGATASTSSLSSSGHVESNSSGPSEAIHCFGVVGGGGNSGGSGRADTALNQSNRSTVNGGGGNPTNSNGPNLTHNEINAIMPPETRPKMVTVKHPESNKPKPTTKKIVKNIQADQDVIKALQRCRDEGIKRLDLSKSSITVLPNTVRECVHLTELYLYSNKIGQLPTEIGCLVNLRNLALNENSLTSLPESLKHCTQLKVLDLRHNKLAEIPSVIYRLRSLTTLYLRFNRITAVADDLRQLVNLTMLSLRENKIKELGSAIGALVNLTTLDVSHNHLEHLPDDIGNCVNLSALDLQHNELLDIPDSIGNLKSLVRLGLRYNRLNSVPISLKNCKSMDEFNVEGNGITQLPDGMLASLSALTTITLSRNQFTSYPTGGPAQFTNVYSINLEHNRIDKIPYGIFSRAKGLTKLNMKENMLTALPLDVGTWVNMVELNLATNALQKLPDDIMNLQNLEILILSNNMLKKIPNTIGNLRKLRILDLEENRIEVLPHEIGLLHELQRLILQTNQITMLPRSIGHLSNLTHLSVSENNLQFLPEEIGSLESLENLYINQNPGLEKLPFELALCQNLKYLNIDKCPLGTIPPEIQAGGPSLVLQWLKMHSPYRQM.

Disordered regions lie at residues 1 to 29 (MNLCSSAGATASTSSLSSSGHVESNSSGP) and 44 to 79 (NSGGSGRADTALNQSNRSTVNGGGGNPTNSNGPNLT). 20 LRR repeats span residues 134 to 155 (GIKRLDLSKSSITVLPNTVREC), 157 to 178 (HLTELYLYSNKIGQLPTEIGCL), 180 to 201 (NLRNLALNENSLTSLPESLKHC), 203 to 224 (QLKVLDLRHNKLAEIPSVIYRL), 226 to 247 (SLTTLYLRFNRITAVADDLRQL), 249 to 270 (NLTMLSLRENKIKELGSAIGAL), 272 to 293 (NLTTLDVSHNHLEHLPDDIGNC), 295 to 316 (NLSALDLQHNELLDIPDSIGNL), 318 to 340 (SLVRLGLRYNRLNSVPISLKNCK), 341 to 362 (SMDEFNVEGNGITQLPDGMLAS), 365 to 386 (ALTTITLSRNQFTSYPTGGPAQ), 389 to 410 (NVYSINLEHNRIDKIPYGIFSR), 413 to 434 (GLTKLNMKENMLTALPLDVGTW), 436 to 457 (NMVELNLATNALQKLPDDIMNL), 459 to 480 (NLEILILSNNMLKKIPNTIGNL), 482 to 503 (KLRILDLEENRIEVLPHEIGLL), 505 to 526 (ELQRLILQTNQITMLPRSIGHL), 528 to 549 (NLTHLSVSENNLQFLPEEIGSL), 551 to 573 (SLENLYINQNPGLEKLPFELALC), and 575 to 596 (NLKYLNIDKCPLGTIPPEIQAG).

The protein belongs to the SHOC2 family.

Its function is as follows. Acts as a Ras effector and participates in MAPK pathway activation. Probably acts as a regulatory subunit of protein phosphatase that specifically dephosphorylates Raf kinase and stimulate Raf activity at specialized signaling complexes upon Ras activation. This chain is Leucine-rich repeat protein soc-2 homolog (Sur-8), found in Drosophila virilis (Fruit fly).